The following is a 97-amino-acid chain: Type VII secretion system extracellular protein A (97 aa).

Residues Lys-61–Asn-93 adopt a coiled-coil conformation.

Belongs to the WXG100 family. sagEsxA-like subfamily. In terms of assembly, forms both homodimers and heterodimers with EsxC.

It localises to the secreted. Virulence factor that is important for the establishment of infection in the host. EsxA is required for EsxB synthesis as well as secretion. Modulates host cell apoptotic pathways and mediates together with EsxB the release of S.aureus from the host cell. By acting on apoptosis, plays a role in the modulation of dendritic cell-mediated immunity. The polypeptide is Type VII secretion system extracellular protein A (Staphylococcus aureus (strain USA300)).